The following is a 696-amino-acid chain: Golgi integral membrane protein 4 (696 aa).

Residue glycine 2 is the site of N-myristoyl glycine attachment. Topologically, residues 2 to 12 (GNGMCSRKQKR) are cytoplasmic. A helical; Signal-anchor for type II membrane protein transmembrane segment spans residues 13–33 (IFQTLLLLTVVFGFLYGAMLY). The Lumenal portion of the chain corresponds to 34 to 696 (YELQTQLRKA…AEKSHRRAEM (663 aa)). A coiled-coil region spans residues 35 to 244 (ELQTQLRKAE…KQLKDTLNRI (210 aa)). The golgi targeting stretch occupies residues 38-107 (TQLRKAEAVA…ETLNKGRQDS (70 aa)). The endosome targeting stretch occupies residues 80–175 (LEHKKAKEDF…QELSKLKETV (96 aa)). Disordered regions lie at residues 122 to 145 (KSQH…QGED), 244 to 391 (IPSL…HARA), and 427 to 696 (LREH…RAEM). A compositionally biased stretch (basic and acidic residues) spans 123 to 145 (SQHEELKKQHSDLEEEHRKQGED). A golgi targeting region spans residues 176–248 (YNLREENRQL…DTLNRIPSLR (73 aa)). Residues 254–269 (EQQNVTQVAHSPQGYN) are compositionally biased toward polar residues. Asparagine 257 is a glycosylation site (N-linked (GlcNAc...) asparagine). Composition is skewed to basic and acidic residues over residues 271–281 (AREKPTREVQE), 298–313 (RAED…KEAE), 324–343 (EVER…RKAL), 355–364 (EHLEEEHDPS), and 370–380 (REWKEQHEQRE). Serine 364 carries the post-translational modification Phosphoserine. The span at 436–453 (QQRLQGHLLRQQEQQQQQ) shows a compositional bias: low complexity. Basic and acidic residues-rich tracts occupy residues 464–476 (AELE…HQEQ) and 505–545 (AYER…RAAV). A Phosphoserine modification is found at serine 538. Acidic residues predominate over residues 604–626 (QQEDNVDEQYQEEAEEEVQEDLT). Tyrosine 613 carries the post-translational modification Phosphotyrosine. Threonine 626 carries the phosphothreonine modification. Composition is skewed to basic and acidic residues over residues 627–638 (EEKKRELEHNAE) and 661–672 (RDDNRPKGREEH). Tyrosine 673 is subject to Phosphotyrosine. The span at 673–683 (YEEEEEEEEDG) shows a compositional bias: acidic residues.

The protein belongs to the GOLIM4 family. In terms of processing, phosphorylated probably by c-AMP-dependent kinases in its lumenal part. O-glycosylated; modified by sialic acid residues. Post-translationally, N-glycosylated; N-glycans are probably of the complex type and modified by sialic acid residues.

The protein localises to the golgi apparatus. It localises to the golgi stack membrane. Its subcellular location is the endosome membrane. The protein resides in the membrane. In terms of biological role, plays a role in endosome to Golgi protein trafficking; mediates protein transport along the late endosome-bypass pathway from the early endosome to the Golgi. This Homo sapiens (Human) protein is Golgi integral membrane protein 4 (GOLIM4).